We begin with the raw amino-acid sequence, 37 residues long: MKVRASVKKICRNCKVVKRKGVIRVLCVEPKHKQRQG.

It belongs to the bacterial ribosomal protein bL36 family.

The chain is Large ribosomal subunit protein bL36 from Colwellia psychrerythraea (strain 34H / ATCC BAA-681) (Vibrio psychroerythus).